The chain runs to 69 residues: Putative membrane protein insertion efficiency factor (69 aa).

This sequence belongs to the UPF0161 family.

The protein localises to the cell inner membrane. Its function is as follows. Could be involved in insertion of integral membrane proteins into the membrane. The chain is Putative membrane protein insertion efficiency factor from Nitrosomonas europaea (strain ATCC 19718 / CIP 103999 / KCTC 2705 / NBRC 14298).